We begin with the raw amino-acid sequence, 129 residues long: Ribulose bisphosphate carboxylase small subunit (129 aa).

A compositionally biased stretch (basic and acidic residues) spans 104-120 (ENEPSLRMTRTESDGRS). The disordered stretch occupies residues 104 to 129 (ENEPSLRMTRTESDGRSQHYTWETQR).

This sequence belongs to the RuBisCO small chain family. As to quaternary structure, heterohexadecamer of 8 large and 8 small subunits.

Functionally, ruBisCO catalyzes two reactions: the carboxylation of D-ribulose 1,5-bisphosphate, the primary event in carbon dioxide fixation, as well as the oxidative fragmentation of the pentose substrate. Both reactions occur simultaneously and in competition at the same active site. Although the small subunit is not catalytic it is essential for maximal activity. This chain is Ribulose bisphosphate carboxylase small subunit, found in Sinorhizobium medicae (strain WSM419) (Ensifer medicae).